The primary structure comprises 27 residues: Snake venom serine protease Afaacytin alpha/beta/beta' chains (27 aa).

The Peptidase S1 domain maps to 1 to 27; the sequence is VIGGAECNINEHRSLVLLYXSSSXFGE.

The protein belongs to the peptidase S1 family. Snake venom subfamily. In terms of assembly, heterodimer of an alpha and a beta chain. Subunit beta is constituted of two disulfide-linked polypeptidic chains, beta and beta'. Calcium appears to be required for structural cohesion of the molecule. Both chains alpha and beta are N-glycosylated. As to expression, expressed by the venom gland.

The protein localises to the secreted. Its activity is regulated as follows. Inhibited by diisopropylfluorophosphate (DFP), benzamidine, heparin and hirudin, but not by plasmatic thrombin inhibitors, antithrombin-III and ecotin. Its function is as follows. Snake venom serine protease that exhibits alpha-fibrinase and beta-fibrinogenase activities. It replaces missing factors VIII (F8) and IX (F9) in deficient plasmas by activating purified human factor X (F10) into factor Xa. It releases serotonin from platelets and induces platelet aggregation in human (but not in rabbit). Has caseinolytic, arginine-esterase and amidase activities. The polypeptide is Snake venom serine protease Afaacytin alpha/beta/beta' chains (Cerastes cerastes (Horned desert viper)).